The chain runs to 695 residues: ATP-dependent zinc metalloprotease FtsH (695 aa).

Residues Met1–Asn15 are Cytoplasmic-facing. Residues Ile16–Ser36 traverse the membrane as a helical segment. Over Asn37–Gln139 the chain is Extracellular. The chain crosses the membrane as a helical span at residues Ile140–Gly160. Residues Met161–Glu695 lie on the Cytoplasmic side of the membrane. ATP is bound at residue Gly233–Thr240. Position 456 (His456) interacts with Zn(2+). Glu457 is an active-site residue. 2 residues coordinate Zn(2+): His460 and Asp532. The disordered stretch occupies residues Lys657–Glu695. The span at Gly674–Glu695 shows a compositional bias: basic and acidic residues.

It in the central section; belongs to the AAA ATPase family. The protein in the C-terminal section; belongs to the peptidase M41 family. Homohexamer. The cofactor is Zn(2+).

The protein localises to the cell membrane. In terms of biological role, acts as a processive, ATP-dependent zinc metallopeptidase for both cytoplasmic and membrane proteins. Plays a role in the quality control of integral membrane proteins. This Lactococcus lactis subsp. lactis (strain IL1403) (Streptococcus lactis) protein is ATP-dependent zinc metalloprotease FtsH.